The sequence spans 291 residues: ATP synthase gamma chain (291 aa).

It belongs to the ATPase gamma chain family. As to quaternary structure, F-type ATPases have 2 components, CF(1) - the catalytic core - and CF(0) - the membrane proton channel. CF(1) has five subunits: alpha(3), beta(3), gamma(1), delta(1), epsilon(1). CF(0) has three main subunits: a, b and c.

It localises to the cell inner membrane. Produces ATP from ADP in the presence of a proton gradient across the membrane. The gamma chain is believed to be important in regulating ATPase activity and the flow of protons through the CF(0) complex. This chain is ATP synthase gamma chain, found in Cupriavidus metallidurans (strain ATCC 43123 / DSM 2839 / NBRC 102507 / CH34) (Ralstonia metallidurans).